We begin with the raw amino-acid sequence, 517 residues long: Bifunctional purine biosynthesis protein PurH (517 aa).

The MGS-like domain maps to 1–145 (MSPLALVSVS…KNHKDVSVLV (145 aa)).

This sequence belongs to the PurH family.

The catalysed reaction is (6R)-10-formyltetrahydrofolate + 5-amino-1-(5-phospho-beta-D-ribosyl)imidazole-4-carboxamide = 5-formamido-1-(5-phospho-D-ribosyl)imidazole-4-carboxamide + (6S)-5,6,7,8-tetrahydrofolate. It catalyses the reaction IMP + H2O = 5-formamido-1-(5-phospho-D-ribosyl)imidazole-4-carboxamide. It functions in the pathway purine metabolism; IMP biosynthesis via de novo pathway; 5-formamido-1-(5-phospho-D-ribosyl)imidazole-4-carboxamide from 5-amino-1-(5-phospho-D-ribosyl)imidazole-4-carboxamide (10-formyl THF route): step 1/1. Its pathway is purine metabolism; IMP biosynthesis via de novo pathway; IMP from 5-formamido-1-(5-phospho-D-ribosyl)imidazole-4-carboxamide: step 1/1. In Prochlorococcus marinus (strain MIT 9312), this protein is Bifunctional purine biosynthesis protein PurH.